An 80-amino-acid polypeptide reads, in one-letter code: Exodeoxyribonuclease 7 small subunit (80 aa).

It belongs to the XseB family. In terms of assembly, heterooligomer composed of large and small subunits.

It is found in the cytoplasm. The enzyme catalyses Exonucleolytic cleavage in either 5'- to 3'- or 3'- to 5'-direction to yield nucleoside 5'-phosphates.. Its function is as follows. Bidirectionally degrades single-stranded DNA into large acid-insoluble oligonucleotides, which are then degraded further into small acid-soluble oligonucleotides. This Erwinia tasmaniensis (strain DSM 17950 / CFBP 7177 / CIP 109463 / NCPPB 4357 / Et1/99) protein is Exodeoxyribonuclease 7 small subunit.